Reading from the N-terminus, the 334-residue chain is Ornithine carbamoyltransferase (334 aa).

Residues 56–59 (STRT), glutamine 83, arginine 107, and 134–137 (HPTQ) contribute to the carbamoyl phosphate site. Residues asparagine 168, aspartate 232, and 236-237 (SM) contribute to the L-ornithine site. Carbamoyl phosphate contacts are provided by residues 274-275 (CL) and arginine 320.

This sequence belongs to the aspartate/ornithine carbamoyltransferase superfamily. OTCase family.

The protein resides in the cytoplasm. The enzyme catalyses carbamoyl phosphate + L-ornithine = L-citrulline + phosphate + H(+). It functions in the pathway amino-acid biosynthesis; L-arginine biosynthesis; L-arginine from L-ornithine and carbamoyl phosphate: step 1/3. In terms of biological role, reversibly catalyzes the transfer of the carbamoyl group from carbamoyl phosphate (CP) to the N(epsilon) atom of ornithine (ORN) to produce L-citrulline. This is Ornithine carbamoyltransferase from Shigella dysenteriae serotype 1 (strain Sd197).